We begin with the raw amino-acid sequence, 142 residues long: ATP synthase epsilon chain (142 aa).

It belongs to the ATPase epsilon chain family. In terms of assembly, F-type ATPases have 2 components, CF(1) - the catalytic core - and CF(0) - the membrane proton channel. CF(1) has five subunits: alpha(3), beta(3), gamma(1), delta(1), epsilon(1). CF(0) has three main subunits: a, b and c.

It localises to the cell inner membrane. In terms of biological role, produces ATP from ADP in the presence of a proton gradient across the membrane. In Shewanella woodyi (strain ATCC 51908 / MS32), this protein is ATP synthase epsilon chain.